The chain runs to 350 residues: Cephaeline 6'-O-methyltransferase IpeOMT1 (350 aa).

5 residues coordinate S-adenosyl-L-methionine: Gly193, Asp216, Asp236, Met237, and Lys250. His254 functions as the Proton acceptor in the catalytic mechanism.

This sequence belongs to the class I-like SAM-binding methyltransferase superfamily. Cation-independent O-methyltransferase family. Expressed in roots.

The protein localises to the cytoplasm. The protein resides in the cytosol. The enzyme catalyses cephaeline + S-adenosyl-L-methionine = emetine + S-adenosyl-L-homocysteine + H(+). It carries out the reaction deacetylisoipecoside + S-adenosyl-L-methionine = 6-O-methyldeacetylisoipecoside + S-adenosyl-L-homocysteine + H(+). The catalysed reaction is 7-O-methyldeacetylisoipecoside + S-adenosyl-L-methionine = 6,7-O,O-dimethyldeacetylisoipecoside + S-adenosyl-L-homocysteine + H(+). It catalyses the reaction norcoclaurine + S-adenosyl-L-methionine = coclaurine + S-adenosyl-L-homocysteine + H(+). The enzyme catalyses (S)-norprotosinomenine + S-adenosyl-L-methionine = (S)-6-O-methylnorprotosinomenine + S-adenosyl-L-homocysteine + H(+). It carries out the reaction (R)-norprotosinomenine + S-adenosyl-L-methionine = (R)-6-O-methylnorprotosinomenine + S-adenosyl-L-homocysteine + H(+). It participates in alkaloid biosynthesis. Its function is as follows. O-methyltransferase involved in the biosynthesis of ipecac and benzylisoquinoline monoterpenoid-isoquinoline alkaloids natural products, starting by the condensation of dopamine and secologanin, and including emetine and cephaeline, drugs used both as anti-protozoal (e.g. treatment of ameobiasis) and as emetic agents. Mediates cephaeline 6'-O-methylation to produce emetine. Catalyzes the 6-O-methylation of N-deacetylisoipecoside, 7-O-methyl-N-deacetylisoipecoside, isococlaurine, norcoclaurine, (S)-norprotosinomenine and (R)-norprotosinomenine, and, with a lower efficiency, of 4'-O-methyllaudanosoline, isoorientaline and protosinomenine. Supports also the 4'-O-methylation of nororientaline. In Carapichea ipecacuanha (Ipecac), this protein is Cephaeline 6'-O-methyltransferase IpeOMT1.